The primary structure comprises 281 residues: Formamidopyrimidine-DNA glycosylase (281 aa).

The Schiff-base intermediate with DNA role is filled by P2. The active-site Proton donor is the E3. Residue K58 is the Proton donor; for beta-elimination activity of the active site. DNA-binding residues include H100, R119, and R160. The FPG-type zinc finger occupies 245 to 281; it reads RVYGREGAPCPTPGCTGTVQRIVQSGRSSFFCPLCQQ. The Proton donor; for delta-elimination activity role is filled by R271.

This sequence belongs to the FPG family. As to quaternary structure, monomer. The cofactor is Zn(2+).

It catalyses the reaction Hydrolysis of DNA containing ring-opened 7-methylguanine residues, releasing 2,6-diamino-4-hydroxy-5-(N-methyl)formamidopyrimidine.. It carries out the reaction 2'-deoxyribonucleotide-(2'-deoxyribose 5'-phosphate)-2'-deoxyribonucleotide-DNA = a 3'-end 2'-deoxyribonucleotide-(2,3-dehydro-2,3-deoxyribose 5'-phosphate)-DNA + a 5'-end 5'-phospho-2'-deoxyribonucleoside-DNA + H(+). Functionally, involved in base excision repair of DNA damaged by oxidation or by mutagenic agents. Acts as a DNA glycosylase that recognizes and removes damaged bases. Has a preference for oxidized purines, such as 7,8-dihydro-8-oxoguanine (8-oxoG). Has AP (apurinic/apyrimidinic) lyase activity and introduces nicks in the DNA strand. Cleaves the DNA backbone by beta-delta elimination to generate a single-strand break at the site of the removed base with both 3'- and 5'-phosphates. The polypeptide is Formamidopyrimidine-DNA glycosylase (Paracoccus denitrificans (strain Pd 1222)).